The chain runs to 139 residues: S-adenosyl-L-methionine-binding protein AF_0241 (139 aa).

In terms of domain architecture, TsaA-like spans 3-133 (LKPIGVVKSP…YSPEIDCVNQ (131 aa)). S-adenosyl-L-methionine-binding positions include glutamine 16, 20–22 (PRQ), 58–59 (DK), arginine 82, leucine 92, and 113–116 (LDGS).

It belongs to the tRNA methyltransferase O family. As to quaternary structure, homodimer.

The protein is S-adenosyl-L-methionine-binding protein AF_0241 of Archaeoglobus fulgidus (strain ATCC 49558 / DSM 4304 / JCM 9628 / NBRC 100126 / VC-16).